Here is a 480-residue protein sequence, read N- to C-terminus: Probable G-protein coupled receptor Mth-like 6 (480 aa).

Positions 1–20 are cleaved as a signal peptide; the sequence is MLLNILAIILVFVISSQSEA. Residues 21 to 202 lie on the Extracellular side of the membrane; the sequence is VIPGCDYFDT…LEHVYIPKSM (182 aa). Intrachain disulfides connect cysteine 25–cysteine 78, cysteine 80–cysteine 85, cysteine 89–cysteine 179, and cysteine 90–cysteine 101. N-linked (GlcNAc...) asparagine glycosylation occurs at asparagine 40. N-linked (GlcNAc...) asparagine glycosylation is found at asparagine 160 and asparagine 170. A helical transmembrane segment spans residues 203–225; sequence PAVPQVGTISMVGCILTIAVYLY. Residues 226–231 lie on the Cytoplasmic side of the membrane; it reads IKKLRN. The helical transmembrane segment at 232–254 threads the bilayer; it reads LLGKCFICYVFCKFVQYLIWAGG. At 255–263 the chain is on the extracellular side; that stretch reads DLNLWNNIC. A helical transmembrane segment spans residues 264-283; it reads SLAGYTNYFFALASHFWLSV. The Cytoplasmic portion of the chain corresponds to 284-303; it reads MSHQIWKNLRLINRDERSYH. A helical transmembrane segment spans residues 304–326; that stretch reads FLIYNIYGWGTPAIMTAITYLVD. The Extracellular portion of the chain corresponds to 327–356; the sequence is WAWEDRPDKLNWIPGVGLYRCWINTYDWSA. Residues 357–379 traverse the membrane as a helical segment; sequence MIYLYGPMLILSLFNVVTFILTV. The Cytoplasmic segment spans residues 380-405; it reads NHIMKIKSSVKSSTQQQRKCIQNNDF. A helical transmembrane segment spans residues 406–428; it reads LLYLRLSVMMGVTGISEVITYFV. Residues 429-437 lie on the Extracellular side of the membrane; the sequence is KRHKFWRQV. A helical transmembrane segment spans residues 438–457; that stretch reads LRVPNFFHLGSGIVVFVLFI. Residues 458–480 lie on the Cytoplasmic side of the membrane; that stretch reads LKRSTFQMIMERISGPRRQQPAS.

This sequence belongs to the G-protein coupled receptor 2 family. Mth subfamily.

The protein localises to the cell membrane. This chain is Probable G-protein coupled receptor Mth-like 6 (mthl6), found in Drosophila melanogaster (Fruit fly).